A 247-amino-acid chain; its full sequence is ATP synthase subunit a (247 aa).

A run of 6 helical transmembrane segments spans residues 26 to 46 (ITNN…LFYV), 85 to 105 (YFPL…IGLL), 115 to 135 (IIFT…INFF), 141 to 161 (FFNL…LVVI), 178 to 198 (FANM…IFNV), and 205 to 225 (ISFL…CIAI).

It belongs to the ATPase A chain family. In terms of assembly, F-type ATPases have 2 components, CF(1) - the catalytic core - and CF(0) - the membrane proton channel. CF(1) has five subunits: alpha(3), beta(3), gamma(1), delta(1), epsilon(1). CF(0) has three main subunits: a, b and c.

Its subcellular location is the mitochondrion inner membrane. Its function is as follows. Mitochondrial membrane ATP synthase (F(1)F(0) ATP synthase or Complex V) produces ATP from ADP in the presence of a proton gradient across the membrane which is generated by electron transport complexes of the respiratory chain. F-type ATPases consist of two structural domains, F(1) - containing the extramembraneous catalytic core and F(0) - containing the membrane proton channel, linked together by a central stalk and a peripheral stalk. During catalysis, ATP synthesis in the catalytic domain of F(1) is coupled via a rotary mechanism of the central stalk subunits to proton translocation. Key component of the proton channel; it may play a direct role in the translocation of protons across the membrane. This chain is ATP synthase subunit a (ATP6), found in Acanthamoeba castellanii (Amoeba).